A 378-amino-acid polypeptide reads, in one-letter code: Rhodopsin (378 aa).

At 1-53 (MMSIASGPSHAAYTWTAQGGGFGNQTVVDKVPPEMLHLVDAHWYQFPPMNPLW) the chain is on the extracellular side. N-linked (GlcNAc...) asparagine glycosylation is present at N24. A helical transmembrane segment spans residues 54–78 (HAILGFVIGILGMISVIGNGMVIYI). The Cytoplasmic segment spans residues 79-90 (FTTTKSLRTPSN). A helical membrane pass occupies residues 91-115 (LLVINLAISDFLMMLSMSPAMVINC). At 116 to 130 (YYETWVLGPLVCELY) the chain is on the extracellular side. An intrachain disulfide couples C127 to C204. A helical membrane pass occupies residues 131-150 (GLTGSLFGCGSIWTMTMIAF). At 151–169 (DRYNVIVKGLSAKPMTING) the chain is on the cytoplasmic side. The helical transmembrane segment at 170-193 (ALLRILGIWFFSLGWTIAPMFGWN) threads the bilayer. Over 194-217 (RYVPEGNMTACGTDYLTKDLLSRS) the chain is Extracellular. The N-linked (GlcNAc...) asparagine glycan is linked to N200. A helical transmembrane segment spans residues 218 to 245 (YILVYSFFCYFLPLFLIIYSYFFIIQAV). The Cytoplasmic portion of the chain corresponds to 246–280 (AAHEKNMREQAKKMNVASLRSAENQSTSAECKLAK). The chain crosses the membrane as a helical span at residues 281–304 (VALMTISLWFMAWTPYLVINYAGI). Topologically, residues 305-311 (FETVKIN) are extracellular. Residues 312 to 336 (PLFTIWGSLFAKANAVYNPIVYGIS) form a helical membrane-spanning segment. Position 323 is an N6-(retinylidene)lysine (K323). Topologically, residues 337 to 378 (HPKYRAALFQRFPSLACSSGPAGADTLSTTTTVTEGTEKPAA) are cytoplasmic. The disordered stretch occupies residues 356–378 (GPAGADTLSTTTTVTEGTEKPAA). A compositionally biased stretch (low complexity) spans 362-371 (TLSTTTTVTE).

This sequence belongs to the G-protein coupled receptor 1 family. Opsin subfamily. Phosphorylated on some or all of the serine and threonine residues present in the C-terminal region.

It localises to the membrane. Its function is as follows. Visual pigments are the light-absorbing molecules that mediate vision. They consist of an apoprotein, opsin, covalently linked to cis-retinal. The polypeptide is Rhodopsin (Cataglyphis bombycina (Saharan silver ant)).